The sequence spans 73 residues: UPF0337 protein lp_1708 (73 aa).

2 stretches are compositionally biased toward basic and acidic residues: residues 1–35 (MSDVNKKFDSKKDQLSGKAKEVEGKVTGDRAREAQ) and 44–73 (KAKDKLADAEETVKGVVDEAKDKMKKKSDD). Positions 1 to 73 (MSDVNKKFDS…KDKMKKKSDD (73 aa)) are disordered.

Belongs to the UPF0337 (CsbD) family.

The chain is UPF0337 protein lp_1708 from Lactiplantibacillus plantarum (strain ATCC BAA-793 / NCIMB 8826 / WCFS1) (Lactobacillus plantarum).